Here is a 692-residue protein sequence, read N- to C-terminus: MAIERITDNKFELVSKYDPAGDQGQAISELVENIENGEKAQILRGATGTGKTYTMSQVIAQTGKPTLVMAHNKTLAGQLYSEFKEFFPNNAVEYFVSYYDYYQPEAYVPSSDTYIEKDSSVNDEIDKLRHSATSSLLERNDVIVVASVSCIYGLGSPKEYQDSVVSLRPGQEISRDQLLNDLVGIQFERNDIDFQRGCFRVRGDVVEVFPASRDEHAFRVEFFGDEIDRIREIEVLTGQVLGEVDHLAIFPATHFMTNDDRMEESIAKIEAELEAQLKVFRSEGKLLEAQRLEQRTNYDIEMLREMGYCNGVENYSRHMDGREEGEPPYTLLDFFPDDFMIMIDESHMTMGQVKGMYNGDRARKEMLCNYGFRLPSALDNRPLKREEFESHVHQIVYVSATPGDYEMEQTDTIVEQIIRPTGLLDPVVEVRPMMGQIDDLVGEIHKRAEKNERVFVTTLTKKMSEDLTAYFKEMGIKVKYMHSDIKTLERTEIIRDLRLGVFDVLVGINLLREGIDVPEVSLVAILDADKEGFLRNERGLIQTIGRAARNSEGHVILYSDMAKALDENDPADKEILDSGYYTEYEGKKYKITRSMKHAMDETARRRDIQMAYNEEHGITPQTIKKEIRDLIAITKKTDSGELEEVDASAMNKKERKALVKKLEKEMQQAAAALDFEGAAQLRDMVLELRAMD.

One can recognise a Helicase ATP-binding domain in the interval 32–187 (ENIENGEKAQ…LLNDLVGIQF (156 aa)). 45–52 (GATGTGKT) is a binding site for ATP. The Beta-hairpin motif lies at 98 to 121 (YYDYYQPEAYVPSSDTYIEKDSSV). Residues 436-631 (QIDDLVGEIH…TIKKEIRDLI (196 aa)) form the Helicase C-terminal domain. Residues 656-691 (KALVKKLEKEMQQAAAALDFEGAAQLRDMVLELRAM) form the UVR domain.

The protein belongs to the UvrB family. As to quaternary structure, forms a heterotetramer with UvrA during the search for lesions. Interacts with UvrC in an incision complex.

The protein localises to the cytoplasm. Functionally, the UvrABC repair system catalyzes the recognition and processing of DNA lesions. A damage recognition complex composed of 2 UvrA and 2 UvrB subunits scans DNA for abnormalities. Upon binding of the UvrA(2)B(2) complex to a putative damaged site, the DNA wraps around one UvrB monomer. DNA wrap is dependent on ATP binding by UvrB and probably causes local melting of the DNA helix, facilitating insertion of UvrB beta-hairpin between the DNA strands. Then UvrB probes one DNA strand for the presence of a lesion. If a lesion is found the UvrA subunits dissociate and the UvrB-DNA preincision complex is formed. This complex is subsequently bound by UvrC and the second UvrB is released. If no lesion is found, the DNA wraps around the other UvrB subunit that will check the other stand for damage. This is UvrABC system protein B from Lactococcus lactis subsp. cremoris (strain MG1363).